Reading from the N-terminus, the 326-residue chain is Ribosomal large subunit pseudouridine synthase D (326 aa).

Residue aspartate 144 is part of the active site.

This sequence belongs to the pseudouridine synthase RluA family.

It localises to the cytoplasm. It catalyses the reaction uridine(1911/1915/1917) in 23S rRNA = pseudouridine(1911/1915/1917) in 23S rRNA. In terms of biological role, responsible for synthesis of pseudouridine from uracil at positions 1911, 1915 and 1917 in 23S ribosomal RNA. This chain is Ribosomal large subunit pseudouridine synthase D, found in Borreliella burgdorferi (strain ATCC 35210 / DSM 4680 / CIP 102532 / B31) (Borrelia burgdorferi).